The following is a 684-amino-acid chain: G-protein-signaling modulator 2 (684 aa).

An important for interaction with NUMA1; INSC and FRMPD1 region spans residues 22-357 (ASCLELALEG…HLEISREVGD (336 aa)). TPR repeat units follow at residues 24–57 (CLEL…GTED), 62–95 (SAIY…ARTI), 102–135 (AKAS…SREL), 142–184 (ARAL…AVDF), 202–235 (GRAF…AKEF), 242–275 (RRAY…ARQL), 282–315 (AQSC…AQEL), and 322–355 (GRAC…SREV). Ser-132 carries the phosphoserine; by PKG modification. A Phosphoserine; by PKG modification is found at Ser-352. Residues Ser-408 and Ser-483 each carry the phosphoserine modification. At Thr-486 the chain carries Phosphothreonine. The GoLoco 1 domain occupies 489–511 (DEGFFDLLSRFQSNRMDDQRCCL). Ser-501 carries the phosphoserine; by PKC modification. Phosphoserine is present on residues Ser-541 and Ser-565. GoLoco domains follow at residues 544–566 (TDEF…RASF), 594–616 (DEDF…RCAP), and 628–650 (DEDF…RVLL). Position 607 is a phosphoserine; by PKG (Ser-607). Arg-608, Arg-613, Arg-642, and Arg-647 together coordinate GDP.

Belongs to the GPSM family. As to quaternary structure, interacts with the dynein-dynactin complex; this interaction is inhibited in a PLK1-dependent manner. Part of a spindle orientation complex at least composed of GNAI1, GPSM2 and NUMA1. Interacts with LLGL2. Interacts (via TPR repeat region) with INSC/inscuteable. Interacts (via TPR repeat region) with NUMA1 (via C-terminus); this interaction is direct, inhibited in a PLK1-dependent manner, prevents the binding of NUMA1 with SPAG5 and promotes spindle pole organization. INSC and NUMA1 compete for the same binding site, but INSC has higher affinity and can displace NUMA1 (in vitro). Interacts with GNAI2. Interacts (via GoLoco domains) with the GDP-bound form of GNAI1 and GNAI3; has much lower affinity for the GTP-bound form. Interaction with GDP-bound GNAI3 strongly enhances the affinity for NUMA1. Interacts (via TPR repeat region) with FRMPD1. INSC and FRMPD1 compete for the same binding site, but INSC has higher affinity and can displace FRMPD1 (in vitro). Interacts (via TPR repeat region) with FRMPD4. Identified in a complex with INSC and F2RL2/Par3. Interacts with TASOR. As to expression, ubiquitously expressed.

It localises to the cytoplasm. The protein resides in the cell cortex. The protein localises to the cytoskeleton. Its subcellular location is the spindle pole. It is found in the lateral cell membrane. Functionally, plays an important role in mitotic spindle pole organization via its interaction with NUMA1. Required for cortical dynein-dynactin complex recruitment during metaphase. Plays a role in metaphase spindle orientation. Also plays an important role in asymmetric cell divisions. Has guanine nucleotide dissociation inhibitor (GDI) activity towards G(i) alpha proteins, such as GNAI1 and GNAI3, and thereby regulates their activity. This chain is G-protein-signaling modulator 2 (GPSM2), found in Homo sapiens (Human).